Consider the following 100-residue polypeptide: Large ribosomal subunit protein mL53 (100 aa).

It belongs to the mitochondrion-specific ribosomal protein mL53 family. As to quaternary structure, component of the mitochondrial large ribosomal subunit (mt-LSU). Mature yeast 74S mitochondrial ribosomes consist of a small (37S) and a large (54S) subunit. The 37S small subunit contains a 15S ribosomal RNA (15S mt-rRNA) and at least 32 different proteins. The 54S large subunit contains a 21S rRNA (21S mt-rRNA) and at least 45 different proteins.

It localises to the mitochondrion. In terms of biological role, component of the mitochondrial ribosome (mitoribosome), a dedicated translation machinery responsible for the synthesis of mitochondrial genome-encoded proteins, including at least some of the essential transmembrane subunits of the mitochondrial respiratory chain. The mitoribosomes are attached to the mitochondrial inner membrane and translation products are cotranslationally integrated into the membrane. This is Large ribosomal subunit protein mL53 (mrpl44) from Schizosaccharomyces pombe (strain 972 / ATCC 24843) (Fission yeast).